We begin with the raw amino-acid sequence, 256 residues long: 5'-nucleotidase YutF (256 aa).

Belongs to the HAD-like hydrolase superfamily. NagD family. As to quaternary structure, homodimer. Requires Mg(2+) as cofactor.

Its subcellular location is the cytoplasm. It catalyses the reaction a ribonucleoside 5'-phosphate + H2O = a ribonucleoside + phosphate. The catalysed reaction is XMP + H2O = xanthosine + phosphate. Catalyzes the hydrolysis of various purine and pyrimidine 5'-nucleotides, showing preference for 5'-nucleoside monophosphates and exhibiting the highest catalytic activity toward 5'-XMP. Also shows a relatively high phosphohydrolase activity toward the nucleotide precursors ribose-5-phosphate (R5P) and 5-phosphoribosyl-1-pyrophosphate (PRPP), and toward the non-natural substrate p-nitrophenyl phosphate (pNPP). This chain is 5'-nucleotidase YutF (yutF), found in Bacillus subtilis (strain 168).